Reading from the N-terminus, the 939-residue chain is Translation initiation factor IF-2 (939 aa).

Disordered stretches follow at residues 51-81 and 137-353; these read LGTKESGQDTGQATNEAAAAHRPTTVIGGKK and VTNK…EMKA. Basic and acidic residues predominate over residues 181-210; sequence NEKKAGAPEIKRAEHTETVEKSKTAVDSKK. Residues 259 to 277 show a composition bias toward low complexity; it reads PVNRSPRPSTPSPNRSAGG. Residues 300 to 312 are compositionally biased toward basic and acidic residues; that stretch reads RRDEKPAERDSRP. One can recognise a tr-type G domain in the interval 437–606; that stretch reads GRCPVVTVMG…QLAAEMLELK (170 aa). The G1 stretch occupies residues 446–453; the sequence is GHVDHGKT. Position 446-453 (446-453) interacts with GTP; it reads GHVDHGKT. The interval 471 to 475 is G2; the sequence is GITQH. The tract at residues 492 to 495 is G3; sequence DTPG. GTP is bound by residues 492-496 and 546-549; these read DTPGH and NKID. A G4 region spans residues 546–549; it reads NKID. Residues 582–584 form a G5 region; the sequence is SAK.

Belongs to the TRAFAC class translation factor GTPase superfamily. Classic translation factor GTPase family. IF-2 subfamily.

It is found in the cytoplasm. Its function is as follows. One of the essential components for the initiation of protein synthesis. Protects formylmethionyl-tRNA from spontaneous hydrolysis and promotes its binding to the 30S ribosomal subunits. Also involved in the hydrolysis of GTP during the formation of the 70S ribosomal complex. The polypeptide is Translation initiation factor IF-2 (Desulfotalea psychrophila (strain LSv54 / DSM 12343)).